Consider the following 183-residue polypeptide: Shikimate kinase (183 aa).

18–23 contributes to the ATP binding site; the sequence is GVGKTT. Threonine 22 contributes to the Mg(2+) binding site. Substrate-binding residues include aspartate 40, arginine 64, and glycine 86. Arginine 125 contacts ATP. A substrate-binding site is contributed by arginine 143.

It belongs to the shikimate kinase family. As to quaternary structure, monomer. Requires Mg(2+) as cofactor.

It localises to the cytoplasm. It carries out the reaction shikimate + ATP = 3-phosphoshikimate + ADP + H(+). The protein operates within metabolic intermediate biosynthesis; chorismate biosynthesis; chorismate from D-erythrose 4-phosphate and phosphoenolpyruvate: step 5/7. Catalyzes the specific phosphorylation of the 3-hydroxyl group of shikimic acid using ATP as a cosubstrate. The polypeptide is Shikimate kinase (Oceanobacillus iheyensis (strain DSM 14371 / CIP 107618 / JCM 11309 / KCTC 3954 / HTE831)).